Here is a 911-residue protein sequence, read N- to C-terminus: DNA polymerase I (911 aa).

One can recognise a 5'-3' exonuclease domain in the interval 186 to 280 (VTPAQYPDLA…DTLRLQPWDR (95 aa)). In terms of domain architecture, 3'-5' exonuclease spans 320–497 (RGGLLESGTV…LAAALDAELD (178 aa)).

It belongs to the DNA polymerase type-A family. Single-chain monomer with multiple functions.

The enzyme catalyses DNA(n) + a 2'-deoxyribonucleoside 5'-triphosphate = DNA(n+1) + diphosphate. Its function is as follows. In addition to polymerase activity, this DNA polymerase exhibits 3'-5' and 5'-3' exonuclease activity. The polypeptide is DNA polymerase I (polA) (Mycobacterium leprae (strain TN)).